The primary structure comprises 414 residues: Histidine--tRNA ligase (414 aa).

This sequence belongs to the class-II aminoacyl-tRNA synthetase family. Homodimer.

It is found in the cytoplasm. The enzyme catalyses tRNA(His) + L-histidine + ATP = L-histidyl-tRNA(His) + AMP + diphosphate + H(+). The chain is Histidine--tRNA ligase (hisS) from Mycoplasma pneumoniae (strain ATCC 29342 / M129 / Subtype 1) (Mycoplasmoides pneumoniae).